The chain runs to 234 residues: Leucyl/phenylalanyl-tRNA--protein transferase (234 aa).

This sequence belongs to the L/F-transferase family.

It is found in the cytoplasm. It catalyses the reaction N-terminal L-lysyl-[protein] + L-leucyl-tRNA(Leu) = N-terminal L-leucyl-L-lysyl-[protein] + tRNA(Leu) + H(+). The catalysed reaction is N-terminal L-arginyl-[protein] + L-leucyl-tRNA(Leu) = N-terminal L-leucyl-L-arginyl-[protein] + tRNA(Leu) + H(+). The enzyme catalyses L-phenylalanyl-tRNA(Phe) + an N-terminal L-alpha-aminoacyl-[protein] = an N-terminal L-phenylalanyl-L-alpha-aminoacyl-[protein] + tRNA(Phe). Its function is as follows. Functions in the N-end rule pathway of protein degradation where it conjugates Leu, Phe and, less efficiently, Met from aminoacyl-tRNAs to the N-termini of proteins containing an N-terminal arginine or lysine. This Klebsiella pneumoniae (strain 342) protein is Leucyl/phenylalanyl-tRNA--protein transferase.